The sequence spans 340 residues: Glycerol-3-phosphate dehydrogenase [NAD(P)+] (340 aa).

NADPH contacts are provided by Ser-14, Phe-15, Arg-35, and Lys-108. Positions 108 and 136 each coordinate sn-glycerol 3-phosphate. Ala-140 lines the NADPH pocket. Sn-glycerol 3-phosphate-binding residues include Lys-191, Asp-244, Ser-254, Arg-255, and Asn-256. Catalysis depends on Lys-191, which acts as the Proton acceptor. NADPH is bound at residue Arg-255. Residues Val-279 and Glu-281 each contribute to the NADPH site.

It belongs to the NAD-dependent glycerol-3-phosphate dehydrogenase family.

The protein resides in the cytoplasm. The catalysed reaction is sn-glycerol 3-phosphate + NAD(+) = dihydroxyacetone phosphate + NADH + H(+). It carries out the reaction sn-glycerol 3-phosphate + NADP(+) = dihydroxyacetone phosphate + NADPH + H(+). The protein operates within membrane lipid metabolism; glycerophospholipid metabolism. Functionally, catalyzes the reduction of the glycolytic intermediate dihydroxyacetone phosphate (DHAP) to sn-glycerol 3-phosphate (G3P), the key precursor for phospholipid synthesis. This chain is Glycerol-3-phosphate dehydrogenase [NAD(P)+], found in Ectopseudomonas mendocina (strain ymp) (Pseudomonas mendocina).